Here is a 113-residue protein sequence, read N- to C-terminus: Hydrogenase maturation factor HypA (113 aa).

Position 2 (histidine 2) interacts with Ni(2+). The Zn(2+) site is built by cysteine 73, cysteine 76, cysteine 89, and cysteine 92.

It belongs to the HypA/HybF family.

In terms of biological role, involved in the maturation of [NiFe] hydrogenases. Required for nickel insertion into the metal center of the hydrogenase. This is Hydrogenase maturation factor HypA from Methylocella silvestris (strain DSM 15510 / CIP 108128 / LMG 27833 / NCIMB 13906 / BL2).